The chain runs to 529 residues: uncharacterized protein (529 aa).

ABC transporter domains lie at 6–257 and 287–526; these read LAIE…QKLL and IRKG…RQLL. ATP is bound by residues 42–49 and 319–326; these read GESGSGKS.

The protein belongs to the ABC transporter superfamily.

This is an uncharacterized protein from Escherichia coli (strain K12).